Consider the following 600-residue polypeptide: DNA polymerase alpha subunit B (600 aa).

A disordered region spans residues 107 to 165 (ETLLSSYTTPSKGPLKRVSSTPETPLTKRSVAARSPRQLLSPSSFSPSATPSQKYTSRT). Ser-126 is modified (phosphoserine). Residues Thr-127 and Thr-130 each carry the phosphothreonine modification. The segment covering 139 to 159 (ARSPRQLLSPSSFSPSATPSQ) has biased composition (low complexity). Phosphoserine is present on residues Ser-141, Ser-147, Ser-152, and Ser-154.

Belongs to the DNA polymerase alpha subunit B family. In terms of assembly, component of the alpha DNA polymerase complex (also known as the alpha DNA polymerase-primase complex) consisting of four subunits: the catalytic subunit POLA1, the regulatory subunit POLA2, and the primase complex subunits PRIM1 and PRIM2 respectively. Within the complex, POLA1 directly interacts with PRIM2. Phosphorylated in a cell cycle-dependent manner, in G2/M phase.

The protein localises to the nucleus. Functionally, accessory subunit of the DNA polymerase alpha complex (also known as the alpha DNA polymerase-primase complex) which plays an essential role in the initiation of DNA synthesis. During the S phase of the cell cycle, the DNA polymerase alpha complex (composed of a catalytic subunit POLA1, an accessory subunit POLA2 and two primase subunits, the catalytic subunit PRIM1 and the regulatory subunit PRIM2) is recruited to DNA at the replicative forks via direct interactions with MCM10 and WDHD1. The primase subunit of the polymerase alpha complex initiates DNA synthesis by oligomerising short RNA primers on both leading and lagging strands. These primers are initially extended by the polymerase alpha catalytic subunit and subsequently transferred to polymerase delta and polymerase epsilon for processive synthesis on the lagging and leading strand, respectively. The chain is DNA polymerase alpha subunit B (Pola2) from Mus musculus (Mouse).